Here is a 275-residue protein sequence, read N- to C-terminus: Light-independent protochlorophyllide reductase iron-sulfur ATP-binding protein (275 aa).

ATP contacts are provided by residues 12–17 (GIGKST) and Lys-41. Ser-16 provides a ligand contact to Mg(2+). Cys-97 and Cys-131 together coordinate [4Fe-4S] cluster. 182–183 (NR) contributes to the ATP binding site.

It belongs to the NifH/BchL/ChlL family. As to quaternary structure, homodimer. Protochlorophyllide reductase is composed of three subunits; BchL, BchN and BchB. The cofactor is [4Fe-4S] cluster.

The catalysed reaction is chlorophyllide a + oxidized 2[4Fe-4S]-[ferredoxin] + 2 ADP + 2 phosphate = protochlorophyllide a + reduced 2[4Fe-4S]-[ferredoxin] + 2 ATP + 2 H2O. It functions in the pathway porphyrin-containing compound metabolism; bacteriochlorophyll biosynthesis (light-independent). Functionally, component of the dark-operative protochlorophyllide reductase (DPOR) that uses Mg-ATP and reduced ferredoxin to reduce ring D of protochlorophyllide (Pchlide) to form chlorophyllide a (Chlide). This reaction is light-independent. The L component serves as a unique electron donor to the NB-component of the complex, and binds Mg-ATP. The sequence is that of Light-independent protochlorophyllide reductase iron-sulfur ATP-binding protein from Chlorobium limicola (strain DSM 245 / NBRC 103803 / 6330).